The primary structure comprises 575 residues: 4-substituted benzoates-glutamate ligase GH3.12 (575 aa).

Residues 6-33 (DINETFEKQLKDLTSNVKSIQDNLLEEI) adopt a coiled-coil conformation. AMP is bound at residue 95 to 96 (SS). 120-123 (YDLR) contacts salicylate. AMP-binding residues include Thr301, Thr324, Ser328, Tyr347, Asp398, and Arg417.

Belongs to the IAA-amido conjugating enzyme family. Interacts with the P.syringae pv. maculicola effector HopW1-1 (via C-terminus). As to expression, expressed in seedlings, mostly in cotyledons, leaves, hypocotyls and sporadically in roots. Not detected in unchallenged adult plants, except in flowers.

Its activity is regulated as follows. Specifically and reversibly inhibited by salicylic acid (SA). Its function is as follows. Catalyzes the conjugation of specific amino acids (e.g. Glu and possibly His, Lys, and Met) to their preferred acyl substrates (e.g. 4-substituted benzoates), in a magnesium ion- and ATP-dependent manner. Can use 4-substituted benzoates such as 4-aminobenzoate (pABA), 4-fluorobenzoate and 4-hydroxybenzoate (4-HBA), and, to a lesser extent, benzoate, vanillate and trans-cinnamate, but not 2-substituted benzoates and salicylic acid (SA), as conjugating acyl substrates. Involved in both basal and induced resistance in a SA-dependent manner. Confers resistance to virulent and avirulent pathogens (at least bacteria and oomycetes), and promotes SA glucosides accumulation. Required for the establishment of hyper-sensitive response (HR) upon incompatible interaction and subsequent systemic acquired resistance (SAR). This is 4-substituted benzoates-glutamate ligase GH3.12 (GH3.12) from Arabidopsis thaliana (Mouse-ear cress).